Here is a 184-residue protein sequence, read N- to C-terminus: Cytidylate kinase (184 aa).

Residue 8–16 (GQPGSGKTT) participates in ATP binding.

It belongs to the cytidylate kinase family. Type 2 subfamily.

It is found in the cytoplasm. It carries out the reaction CMP + ATP = CDP + ADP. The catalysed reaction is dCMP + ATP = dCDP + ADP. The chain is Cytidylate kinase from Pyrobaculum arsenaticum (strain DSM 13514 / JCM 11321 / PZ6).